A 361-amino-acid polypeptide reads, in one-letter code: S-adenosylmethionine:tRNA ribosyltransferase-isomerase (361 aa).

The protein belongs to the QueA family. In terms of assembly, monomer.

The protein localises to the cytoplasm. It catalyses the reaction 7-aminomethyl-7-carbaguanosine(34) in tRNA + S-adenosyl-L-methionine = epoxyqueuosine(34) in tRNA + adenine + L-methionine + 2 H(+). Its pathway is tRNA modification; tRNA-queuosine biosynthesis. Its function is as follows. Transfers and isomerizes the ribose moiety from AdoMet to the 7-aminomethyl group of 7-deazaguanine (preQ1-tRNA) to give epoxyqueuosine (oQ-tRNA). The polypeptide is S-adenosylmethionine:tRNA ribosyltransferase-isomerase (Actinobacillus pleuropneumoniae serotype 7 (strain AP76)).